Reading from the N-terminus, the 108-residue chain is Thioredoxin C-2 (108 aa).

In terms of domain architecture, Thioredoxin spans 2 to 108; that stretch reads SATIVNTTDE…KLAAFIDQNI (107 aa). The cysteines at positions 33 and 36 are disulfide-linked.

This sequence belongs to the thioredoxin family.

In terms of biological role, participates in various redox reactions through the reversible oxidation of its active center dithiol to a disulfide and catalyzes dithiol-disulfide exchange reactions. The chain is Thioredoxin C-2 from Corynebacterium nephridii.